Here is a 371-residue protein sequence, read N- to C-terminus: tRNA-specific 2-thiouridylase MnmA (371 aa).

ATP contacts are provided by residues 16 to 23 and Met42; that span reads GMSGGVDS. Residues 102-104 are interaction with target base in tRNA; that stretch reads NPD. Cys107 (nucleophile) is an active-site residue. Cys107 and Cys204 are disulfide-bonded. Gly132 provides a ligand contact to ATP. Residues 154–156 are interaction with tRNA; the sequence is KDQ. Cys204 serves as the catalytic Cysteine persulfide intermediate. The segment at 316–317 is interaction with tRNA; that stretch reads RY.

Belongs to the MnmA/TRMU family.

Its subcellular location is the cytoplasm. It catalyses the reaction S-sulfanyl-L-cysteinyl-[protein] + uridine(34) in tRNA + AH2 + ATP = 2-thiouridine(34) in tRNA + L-cysteinyl-[protein] + A + AMP + diphosphate + H(+). Its function is as follows. Catalyzes the 2-thiolation of uridine at the wobble position (U34) of tRNA, leading to the formation of s(2)U34. The polypeptide is tRNA-specific 2-thiouridylase MnmA (Shewanella pealeana (strain ATCC 700345 / ANG-SQ1)).